The chain runs to 692 residues: Protein hook (692 aa).

A Calponin-homology (CH) domain is found at Ser-6 to Ala-123. Positions Glu-135–Thr-576 form a coiled coil. Residues Ala-161–Val-180 are disordered.

Belongs to the hook family. Homodimer. Interacts with microtubules via its N-terminus.

It is found in the cytoplasm. The protein resides in the cytoskeleton. It localises to the endosome. The protein localises to the synapse. In terms of biological role, involved in endocytic trafficking by stabilizing organelles of the endocytic pathway. Probably acts as a cytoskeletal linker protein required to tether endosome vesicles to the cytoskeleton. Involved in modulation of endocytosis at stages required for down-regulation of membrane proteins that control synapse size. Not involved in synaptic vesicle recycling. Required in R7 cells for boss endocytosis into multivesicular bodies (MVBs). Has a role in regulating adult longevity. This is Protein hook from Drosophila willistoni (Fruit fly).